Here is a 503-residue protein sequence, read N- to C-terminus: Na(+)-translocating NADH-quinone reductase subunit B (503 aa).

The next 5 membrane-spanning stretches (helical) occupy residues 55–75 (MMLV…NSGL), 94–114 (ISGF…VPIL), 120–140 (IFIP…VLFA), 161–181 (TLPP…GIVV), and 186–206 (FGGT…FLFF). FMN phosphoryl threonine is present on Thr-248. The next 5 membrane-spanning stretches (helical) occupy residues 361-381 (TSTF…IASW), 386-406 (AFGI…VLIV), 417-437 (FFIP…LVFM), 452-472 (WIYG…NPAY), and 475-495 (GVML…YFAV).

It belongs to the NqrB/RnfD family. As to quaternary structure, composed of six subunits; NqrA, NqrB, NqrC, NqrD, NqrE and NqrF. Requires FMN as cofactor.

Its subcellular location is the cell inner membrane. It catalyses the reaction a ubiquinone + n Na(+)(in) + NADH + H(+) = a ubiquinol + n Na(+)(out) + NAD(+). Its function is as follows. NQR complex catalyzes the reduction of ubiquinone-1 to ubiquinol by two successive reactions, coupled with the transport of Na(+) ions from the cytoplasm to the periplasm. NqrA to NqrE are probably involved in the second step, the conversion of ubisemiquinone to ubiquinol. This chain is Na(+)-translocating NADH-quinone reductase subunit B, found in Chlamydia pneumoniae (Chlamydophila pneumoniae).